Consider the following 700-residue polypeptide: MYCPKAYENEKKNEDLEFERSQSTFSVSELNFILNNNDHNIINIKNEIKKFIDNDEIISKPQEIHFLSREEQYKRALYVSSKLIEIKKRFGEIGRDQYYQSLFEEIPFVINDIVFACAFKSLASDEQMNRLYSKFENYQYFGSYSQTEIGHGSNVQGIETTCTFIKETGEFELNSPNLTSTKFWIGGLGKLATHTIVFAQLLIPSSIDGKLKNYGPHPFILQVRSLDDHSPLPGVTVGDIGPKLGFNSIDNGFLRLDHVRIPRENMLSRFFRVNEQGEYEKPKHPKLIYAGMVGVRSSMIENSFVSLSRAVTIAIRYSTIRKQFKSNRLDKQEKKIIEYSNQMNRIIPYLAQTFAYFFTGKRFSIEFDQMMKAVKHNQDTTLLSELHANSSGLKSLMTQSTSDGIESCRLSCGGHGYSQFSGLPYLWSNYVHMSSAEGESNLLPQQTTKYLLTILRKVLSGGGGSSDTTTADDDNKPIGKSVKYINDEFQSSFENINQFIQEKGLNSIIHPDSLLQLFKHRSFILIKSIAESIQEQMSNGNKDIPQIWSDLNVEINHCSKAHCQLYVIQSFYDQILLLSSNSSSCSSSITTVLIQLLQTYSIWIINSNLVDFLQDQYVELSQIDFLKKSLINFYKLLRPNLVPLVDSFDLCNTTLGSALGSYNGDVYSTLYKWASTQPFNKNSLPLGFNETIKPLINSKL.

FAD-binding positions include T147, G186, and 412–417; that span reads CGGHGY. E437 functions as the Proton acceptor in the catalytic mechanism. The Microbody targeting signal signature appears at 698-700; that stretch reads SKL.

This sequence belongs to the acyl-CoA oxidase family. Requires FAD as cofactor.

The protein resides in the peroxisome. It carries out the reaction a 2,3-saturated acyl-CoA + O2 = a (2E)-enoyl-CoA + H2O2. Catalyzes the desaturation of acyl-CoAs to 2-trans-enoyl-CoAs. First enzyme of the fatty acid beta-oxidation pathway. The protein is Peroxisomal acyl-coenzyme A oxidase 1 (acox1) of Dictyostelium discoideum (Social amoeba).